Here is a 379-residue protein sequence, read N- to C-terminus: Serpin B5 (379 aa).

N-linked (GlcNAc...) asparagine glycosylation is found at asparagine 133, asparagine 176, and asparagine 361.

Belongs to the serpin family. Ov-serpin subfamily.

Its subcellular location is the secreted. It is found in the extracellular space. In terms of biological role, may not exhibit serine protease inhibitory activity. The sequence is that of Serpin B5 (serpinb5) from Xenopus tropicalis (Western clawed frog).